A 366-amino-acid chain; its full sequence is Aminomethyltransferase (366 aa).

This sequence belongs to the GcvT family. The glycine cleavage system is composed of four proteins: P, T, L and H.

It carries out the reaction N(6)-[(R)-S(8)-aminomethyldihydrolipoyl]-L-lysyl-[protein] + (6S)-5,6,7,8-tetrahydrofolate = N(6)-[(R)-dihydrolipoyl]-L-lysyl-[protein] + (6R)-5,10-methylene-5,6,7,8-tetrahydrofolate + NH4(+). Its function is as follows. The glycine cleavage system catalyzes the degradation of glycine. This is Aminomethyltransferase from Bacillus cereus (strain G9842).